The chain runs to 485 residues: MTDIINKLQAFADANPQSIAVRHTTDELTYQQLMDESSKLAHRLQGSKKPMILFGHMSPYMIVGMIGAIKAGCGYVPVDTSIPEDRIKMIINKVQPEFVFNTTDESFESLEGEVFTIEDIKTSQDPVIFDSQIKDNDTVYTIFTSGSTGEPKGVQIEYASLVQFTEWMLELNKSGNEQQWLNQAPFSFDLSVMAIYPCLASGGTLNLVDKNMINKPKLLNEMLTATPINIWVSTPSFMEMCLLLPTLNEEQYGSLNEFFFCGEILPHRAAKALVNRFPSATIYNTYGPTEATVAVTSIQITQEILDQYPTLPVGVERPGARLSTTDEGELVIEGQSVSLGYLKNDQKTAEVFNFDDGIRTYHTGDKAKFENGQWFIQGRIDFQIKLNGYRMELEEIETQLRQSEFVKEAIVVPVYKNDKVIHLIGAIVPTTEVTDNAEMTKNIKNDLKSRLPEYMIPRKFEWMEQLPLTSNGKIDRKKIAEVING.

144 to 145 (TS) serves as a coordination point for ATP. D-alanine is bound at residue Asp-189. 284–289 (NTYGPT) contributes to the ATP binding site. D-alanine is bound at residue Val-293. The ATP site is built by Asp-365 and Lys-473. Lys-473 provides a ligand contact to D-alanine.

This sequence belongs to the ATP-dependent AMP-binding enzyme family. DltA subfamily.

The protein localises to the cytoplasm. The enzyme catalyses holo-[D-alanyl-carrier protein] + D-alanine + ATP = D-alanyl-[D-alanyl-carrier protein] + AMP + diphosphate. The protein operates within cell wall biogenesis; lipoteichoic acid biosynthesis. Its function is as follows. Catalyzes the first step in the D-alanylation of lipoteichoic acid (LTA), the activation of D-alanine and its transfer onto the D-alanyl carrier protein (Dcp) DltC. In an ATP-dependent two-step reaction, forms a high energy D-alanyl-AMP intermediate, followed by transfer of the D-alanyl residue as a thiol ester to the phosphopantheinyl prosthetic group of the Dcp. D-alanylation of LTA plays an important role in modulating the properties of the cell wall in Gram-positive bacteria, influencing the net charge of the cell wall. The sequence is that of D-alanine--D-alanyl carrier protein ligase from Staphylococcus aureus (strain USA300).